A 398-amino-acid chain; its full sequence is Delta-aminolevulinic acid dehydratase, chloroplastic (398 aa).

Residues Val48–Ser87 form a disordered region. Over residues Glu50–Ala59 the composition is skewed to pro residues. A compositionally biased stretch (low complexity) spans Ser60–Ser69. The span at Arg74–Pro83 shows a compositional bias: basic residues. Lys266 functions as the Schiff-base intermediate with substrate in the catalytic mechanism. Residues Arg276 and Lys288 each coordinate 5-aminolevulinate. Glu304 is a Mg(2+) binding site. Lys319 acts as the Schiff-base intermediate with substrate in catalysis. Positions 345 and 384 each coordinate 5-aminolevulinate.

Belongs to the ALAD family. Homooctamer; formed by oligomerization of dimers. Probably also forms lower oligomers. Requires Mg(2+) as cofactor.

Its subcellular location is the plastid. It localises to the chloroplast. It catalyses the reaction 2 5-aminolevulinate = porphobilinogen + 2 H2O + H(+). The protein operates within porphyrin-containing compound metabolism; protoporphyrin-IX biosynthesis; coproporphyrinogen-III from 5-aminolevulinate: step 1/4. With respect to regulation, activated by magnesium. Inhibited by succinyl acetone. Enzyme activity may depend on the oligomerization state, where the fully active octamer may dissociate and reassemble into less active lower oligomers. In terms of biological role, catalyzes an early step in the biosynthesis of tetrapyrroles. Binds two molecules of 5-aminolevulinate per subunit, each at a distinct site, and catalyzes their condensation to form porphobilinogen. The polypeptide is Delta-aminolevulinic acid dehydratase, chloroplastic (HEMB) (Pisum sativum (Garden pea)).